A 180-amino-acid chain; its full sequence is Putative 5'(3')-deoxyribonucleotidase (180 aa).

Catalysis depends on aspartate 9, which acts as the Nucleophile. Residues aspartate 9, aspartate 11, and aspartate 135 each coordinate Mg(2+). The Proton donor role is filled by aspartate 11.

This sequence belongs to the 5'(3')-deoxyribonucleotidase family. The cofactor is Mg(2+).

In terms of biological role, dephosphorylates the 5' and 2'(3')-phosphates of deoxyribonucleotides. The polypeptide is Putative 5'(3')-deoxyribonucleotidase (Staphylococcus aureus (strain MSSA476)).